The chain runs to 260 residues: Uroplakin-1b (260 aa).

Topologically, residues 1–12 (MAKDDSSVRCFQ) are cytoplasmic. The helical transmembrane segment at 13–38 (GLLIFGNVIVGMCGIALTAECIFFVS) threads the bilayer. The Extracellular segment spans residues 39-60 (DQHSLYPLLEATDNDDIYGAAW). Residues 61–81 (IGMFVGICLFCLSVLGIVGIM) form a helical membrane-spanning segment. Over 82-86 (KSNRK) the chain is Cytoplasmic. A helical transmembrane segment spans residues 87–107 (ILLAYFILMFIVYGFEVASCI). Over 108 to 229 (TAATQRDFFT…ELISGPMNRH (122 aa)) the chain is Extracellular. A helical transmembrane segment spans residues 230-250 (AWGVAWFGFAILCWTFWVLLG). Over 251-260 (TMFYWSRIEY) the chain is Cytoplasmic.

It belongs to the tetraspanin (TM4SF) family. Heterodimer with uroplakin-3A (UPK3A) or uroplakin-3B (UPK3B).

It is found in the membrane. Functionally, component of the asymmetric unit membrane (AUM); a highly specialized biomembrane elaborated by terminally differentiated urothelial cells. This is Uroplakin-1b (UPK1B) from Neovison vison (American mink).